Consider the following 176-residue polypeptide: Ribosome maturation factor RimM (176 aa).

One can recognise a PRC barrel domain in the interval 93 to 172; it reads KDEFFYFDII…KIQVKNSLDI (80 aa).

This sequence belongs to the RimM family. Binds ribosomal protein uS19.

The protein resides in the cytoplasm. Functionally, an accessory protein needed during the final step in the assembly of 30S ribosomal subunit, possibly for assembly of the head region. Essential for efficient processing of 16S rRNA. May be needed both before and after RbfA during the maturation of 16S rRNA. It has affinity for free ribosomal 30S subunits but not for 70S ribosomes. The polypeptide is Ribosome maturation factor RimM (Campylobacter fetus subsp. fetus (strain 82-40)).